The sequence spans 665 residues: Intraflagellar transport protein 70B (665 aa).

7 TPR repeats span residues 11 to 44 (DGEF…SPRS), 45 to 78 (RAGL…HPEL), 154 to 187 (TDGQ…SGYQ), 189 to 221 (DLSY…GIRQ), 393 to 424 (LTIQ…EKYI), 425 to 457 (PVLM…CNDH), and 459 to 492 (VWKL…HYDN). Residues 130–154 (PGSRSLVEQLPSREGGEESGGENET) are disordered. A coiled-coil region spans residues 508 to 535 (YIMTSQNEEAEELMRKIEKEEEQLSYDD). The stretch at 544–577 (CIVNLVIGTLYCAKGNYDFGISRVIKSLEPYNKK) is one TPR 8 repeat.

It belongs to the TTC30/dfy-1/fleer family. Interacts with the IFT B complex components IFT27, IFT46, IFT74, IFT52, IFT57, IFT80, IFT81 and IFT88. Interacts with KIF17.

Its subcellular location is the cell projection. The protein localises to the cilium. Its function is as follows. Required for polyglutamylation of axonemal tubulin. Plays a role in anterograde intraflagellar transport (IFT), the process by which cilia precursors are transported from the base of the cilium to the site of their incorporation at the tip. In Homo sapiens (Human), this protein is Intraflagellar transport protein 70B.